The primary structure comprises 177 residues: Large ribosomal subunit protein uL6 (177 aa).

This sequence belongs to the universal ribosomal protein uL6 family. Part of the 50S ribosomal subunit.

In terms of biological role, this protein binds to the 23S rRNA, and is important in its secondary structure. It is located near the subunit interface in the base of the L7/L12 stalk, and near the tRNA binding site of the peptidyltransferase center. The sequence is that of Large ribosomal subunit protein uL6 from Rhodopseudomonas palustris (strain HaA2).